Here is a 777-residue protein sequence, read N- to C-terminus: MKTYTYSKQDLSFIEQLSQAYCKDPFSYLGLHQAGDVSVIRVFLPEATTVKILSAVGQILSEALKIDDSGLFVAQLAQQYSSLNYRLRVGYSLAEIDLEDPYRFTSSLLPMDNWLLAEGTHLRPYEILGAHLKTQEGVSGVHFSVWAPNARRVSVVGDFNYWDGRVNPMRFHAESGIWDIFLPNVEKGALYKFEILDSNGNIRLKSDPYAFASQFRPDTASVVTGLPEKIEVDAKLRHANDPDQPISIYEVHLGSWRRHLENNYWLNYEEIANELIPYVKDMGFTHIELLPITEYPFDGSWGYQPTGLYSPTSRFGSPEDLRTLIRKAHEAGINVILDWVVGHFPTDSHGLTEFDGSHLYEHQDPREGYHQDWNTLIFNYGRHEVFNYLSSNALYWTERFGIDGLRVDAVSSMIYRDYSRKDGEWIPNQYGGRENLEALDFLRRTNRMLKKEGHGAVVIAEESTSFAGITHSPEENGVGFDYKWNMGWMNDTLRYMSLDPIYRQYHHDWMTFGMMYQYSEKFVLPLSHDEVVHGKCSILGKMSGDCWQKFANLRAYYGYMWGYPGKKLLFMGNEFAQGREWNYNESLDWFLLGEQGGGWHKGVLNWVRDLNRTYQKYPALYQLDYDPAGFEWLVVDDWQQSVFAFERKAKNGESVIVVSNFTPVVRHNYRIGVRQDGTYTEILNSDAAYYEGSNVGNYGEIECEAIESHGKPFSIELSIPPLSTIFIACQPKPKEAVEAEQDIVKMAEVAMQKALKPTKKTVSVKAKAHKKAHKNKK.

Residue Asp408 is the Nucleophile of the active site. The active-site Proton donor is Glu461.

Belongs to the glycosyl hydrolase 13 family. GlgB subfamily. Monomer.

The catalysed reaction is Transfers a segment of a (1-&gt;4)-alpha-D-glucan chain to a primary hydroxy group in a similar glucan chain.. Its pathway is glycan biosynthesis; glycogen biosynthesis. Catalyzes the formation of the alpha-1,6-glucosidic linkages in glycogen by scission of a 1,4-alpha-linked oligosaccharide from growing alpha-1,4-glucan chains and the subsequent attachment of the oligosaccharide to the alpha-1,6 position. In Actinobacillus pleuropneumoniae serotype 5b (strain L20), this protein is 1,4-alpha-glucan branching enzyme GlgB.